The chain runs to 406 residues: Phosphorylase b kinase gamma catalytic chain, liver/testis isoform (406 aa).

The Protein kinase domain occupies 24–291; it reads YDPKDIIGRG…AEQALQHPFF (268 aa). ATP-binding positions include 30–38 and Lys53; that span reads IGRGVSSVV. The active-site Proton acceptor is the Asp153. The interval 306–330 is calmodulin-binding (domain-N); sequence QRFRVAVWTILAAGRVALSSHRLRP. Residues 346 to 370 form a calmodulin-binding (domain-C) region; it reads VRRLIDNCAFRLYGHWVKKGEQQNR.

Belongs to the protein kinase superfamily. CAMK Ser/Thr protein kinase family. As to quaternary structure, hexadecamer of 4 heterotetramers, each composed of alpha, beta, gamma, and delta subunits. Alpha (PHKA1 or PHKA2) and beta (PHKB) are regulatory subunits, gamma (PHKG1 or PHKG2) is the catalytic subunit, and delta is calmodulin.

It catalyses the reaction 2 ATP + phosphorylase b = 2 ADP + phosphorylase a.. Catalytic subunit of the phosphorylase b kinase (PHK), which mediates the neural and hormonal regulation of glycogen breakdown (glycogenolysis) by phosphorylating and thereby activating glycogen phosphorylase. May regulate glycogeneolysis in the testis. In vitro, phosphorylates PYGM. This is Phosphorylase b kinase gamma catalytic chain, liver/testis isoform (Phkg2) from Mus musculus (Mouse).